Consider the following 275-residue polypeptide: Dermonecrotic toxin LspiSicTox-betaIE4i (275 aa).

The Mg(2+) site is built by E24 and D26. Residue H40 is the Nucleophile of the active site. 2 cysteine pairs are disulfide-bonded: C44–C50 and C46–C188. D84 lines the Mg(2+) pocket.

The protein belongs to the arthropod phospholipase D family. Class II subfamily. Mg(2+) serves as cofactor. Expressed by the venom gland.

The protein localises to the secreted. The catalysed reaction is an N-(acyl)-sphingosylphosphocholine = an N-(acyl)-sphingosyl-1,3-cyclic phosphate + choline. The enzyme catalyses an N-(acyl)-sphingosylphosphoethanolamine = an N-(acyl)-sphingosyl-1,3-cyclic phosphate + ethanolamine. It catalyses the reaction a 1-acyl-sn-glycero-3-phosphocholine = a 1-acyl-sn-glycero-2,3-cyclic phosphate + choline. It carries out the reaction a 1-acyl-sn-glycero-3-phosphoethanolamine = a 1-acyl-sn-glycero-2,3-cyclic phosphate + ethanolamine. Its function is as follows. Dermonecrotic toxins cleave the phosphodiester linkage between the phosphate and headgroup of certain phospholipids (sphingolipid and lysolipid substrates), forming an alcohol (often choline) and a cyclic phosphate. This toxin acts on sphingomyelin (SM). It may also act on ceramide phosphoethanolamine (CPE), lysophosphatidylcholine (LPC) and lysophosphatidylethanolamine (LPE), but not on lysophosphatidylserine (LPS), and lysophosphatidylglycerol (LPG). It acts by transphosphatidylation, releasing exclusively cyclic phosphate products as second products. Induces dermonecrosis, hemolysis, increased vascular permeability, edema, inflammatory response, and platelet aggregation. The sequence is that of Dermonecrotic toxin LspiSicTox-betaIE4i from Loxosceles spinulosa (Recluse spider).